The following is a 125-amino-acid chain: Ribosome-binding factor A (125 aa).

The protein belongs to the RbfA family. Monomer. Binds 30S ribosomal subunits, but not 50S ribosomal subunits or 70S ribosomes.

It is found in the cytoplasm. Its function is as follows. One of several proteins that assist in the late maturation steps of the functional core of the 30S ribosomal subunit. Associates with free 30S ribosomal subunits (but not with 30S subunits that are part of 70S ribosomes or polysomes). Required for efficient processing of 16S rRNA. May interact with the 5'-terminal helix region of 16S rRNA. This is Ribosome-binding factor A from Thermosipho melanesiensis (strain DSM 12029 / CIP 104789 / BI429).